The following is a 92-amino-acid chain: UPF0728 protein (92 aa).

This sequence belongs to the UPF0728 family.

The polypeptide is UPF0728 protein (Branchiostoma floridae (Florida lancelet)).